A 312-amino-acid chain; its full sequence is DNA-directed RNA polymerase subunit alpha (312 aa).

The segment at 1 to 226 (MIEFEKPNIT…EHLDLFTDLT (226 aa)) is alpha N-terminal domain (alpha-NTD). The interval 244-312 (DHVLERTIEE…DLGLGLKNDK (69 aa)) is alpha C-terminal domain (alpha-CTD).

It belongs to the RNA polymerase alpha chain family. In terms of assembly, homodimer. The RNAP catalytic core consists of 2 alpha, 1 beta, 1 beta' and 1 omega subunit. When a sigma factor is associated with the core the holoenzyme is formed, which can initiate transcription.

It carries out the reaction RNA(n) + a ribonucleoside 5'-triphosphate = RNA(n+1) + diphosphate. Its function is as follows. DNA-dependent RNA polymerase catalyzes the transcription of DNA into RNA using the four ribonucleoside triphosphates as substrates. This chain is DNA-directed RNA polymerase subunit alpha, found in Streptococcus gordonii (strain Challis / ATCC 35105 / BCRC 15272 / CH1 / DL1 / V288).